We begin with the raw amino-acid sequence, 256 residues long: Small ribosomal subunit protein eS1A (256 aa).

A2 is subject to N-acetylalanine; partial.

It belongs to the eukaryotic ribosomal protein eS1 family. Component of the small ribosomal subunit. Mature ribosomes consist of a small (40S) and a large (60S) subunit. The 40S subunit contains about 33 different proteins and 1 molecule of RNA (18S). The 60S subunit contains about 49 different proteins and 3 molecules of RNA (25S, 5.8S and 5S).

Its subcellular location is the cytoplasm. The chain is Small ribosomal subunit protein eS1A from Scheffersomyces stipitis (strain ATCC 58785 / CBS 6054 / NBRC 10063 / NRRL Y-11545) (Yeast).